Consider the following 113-residue polypeptide: MKITMFFAALSAASGVFAAPAQAAAAAKDLSIGAGVGIGIGAGVGSYGYPYGAYPGWRLQLLPLRWLPLRRLPLRIPILPMVNTLCSVACAQNPRPAHLLIIKPLTPEQFLFL.

Residues 1–18 (MKITMFFAALSAASGVFA) form the signal peptide. 6 tandem repeats follow at residues 32 to 37 (IGAGVG), 40 to 45 (IGAGVG), 46 to 49 (SYGY), 50 to 53 (PYGA), 59 to 65 (LQLLPLR), and 69 to 75 (LRRLPLR). The tract at residues 32 to 45 (IGAGVGIGIGAGVG) is 2 X 6 AA repeats. A 2 X 4 AA approximate tandem repeats region spans residues 46-53 (SYGYPYGA). Positions 59-75 (LQLLPLRWLPLRRLPLR) are 2 X 7 AA approximate repeats.

Its subcellular location is the secreted. The chain is Protein USP2 (USP2) from Puccinia graminis (Black stem rust fungus).